A 505-amino-acid chain; its full sequence is Transcription factor VHR2 (505 aa).

Basic and acidic residues predominate over residues 1 to 16 (MIDDTENSKIHLEGSH). 3 disordered regions span residues 1 to 23 (MIDD…KYTG), 105 to 179 (NRKR…LPYP), and 421 to 460 (QSNP…STSA). Low complexity predominate over residues 133–148 (PSSSNMGSCSASNASS). Polar residues predominate over residues 421-443 (QSNPMRPHSTSEVLSAHSSTKDA).

This sequence belongs to the VHR1 family.

Its subcellular location is the nucleus. Its function is as follows. Transcription factor that regulates ERG9, but seems to have a more global function in transcription. The chain is Transcription factor VHR2 (VHR2) from Saccharomyces cerevisiae (strain ATCC 204508 / S288c) (Baker's yeast).